Reading from the N-terminus, the 238-residue chain is Purine nucleoside phosphorylase DeoD-type (238 aa).

Histidine 4 lines the a purine D-ribonucleoside pocket. Residues glycine 20, arginine 24, arginine 43, and 87-90 (RIGS) each bind phosphate. Residues 181-183 (EME) and 205-206 (SD) contribute to the a purine D-ribonucleoside site. Aspartate 206 (proton donor) is an active-site residue.

It belongs to the PNP/UDP phosphorylase family. In terms of assembly, homohexamer; trimer of homodimers.

It carries out the reaction a purine D-ribonucleoside + phosphate = a purine nucleobase + alpha-D-ribose 1-phosphate. It catalyses the reaction a purine 2'-deoxy-D-ribonucleoside + phosphate = a purine nucleobase + 2-deoxy-alpha-D-ribose 1-phosphate. Its function is as follows. Catalyzes the reversible phosphorolytic breakdown of the N-glycosidic bond in the beta-(deoxy)ribonucleoside molecules, with the formation of the corresponding free purine bases and pentose-1-phosphate. This is Purine nucleoside phosphorylase DeoD-type from Mycoplasma genitalium (strain ATCC 33530 / DSM 19775 / NCTC 10195 / G37) (Mycoplasmoides genitalium).